A 69-amino-acid chain; its full sequence is DNA-directed RNA polymerase subunit epsilon (69 aa).

Belongs to the RNA polymerase subunit epsilon family. As to quaternary structure, RNAP is composed of a core of 2 alpha, a beta and a beta' subunit. The core is associated with a delta subunit, and at least one of epsilon or omega. When a sigma factor is associated with the core the holoenzyme is formed, which can initiate transcription.

It catalyses the reaction RNA(n) + a ribonucleoside 5'-triphosphate = RNA(n+1) + diphosphate. Its function is as follows. A non-essential component of RNA polymerase (RNAP). The polypeptide is DNA-directed RNA polymerase subunit epsilon (Shouchella clausii (strain KSM-K16) (Alkalihalobacillus clausii)).